Reading from the N-terminus, the 193-residue chain is Holliday junction branch migration complex subunit RuvA (193 aa).

The domain I stretch occupies residues methionine 1–leucine 64. The tract at residues threonine 65–leucine 139 is domain II. A flexible linker region spans residues leucine 139–alanine 143. Residues serine 144–valine 193 form a domain III region.

It belongs to the RuvA family. Homotetramer. Forms an RuvA(8)-RuvB(12)-Holliday junction (HJ) complex. HJ DNA is sandwiched between 2 RuvA tetramers; dsDNA enters through RuvA and exits via RuvB. An RuvB hexamer assembles on each DNA strand where it exits the tetramer. Each RuvB hexamer is contacted by two RuvA subunits (via domain III) on 2 adjacent RuvB subunits; this complex drives branch migration. In the full resolvosome a probable DNA-RuvA(4)-RuvB(12)-RuvC(2) complex forms which resolves the HJ.

The protein localises to the cytoplasm. Its function is as follows. The RuvA-RuvB-RuvC complex processes Holliday junction (HJ) DNA during genetic recombination and DNA repair, while the RuvA-RuvB complex plays an important role in the rescue of blocked DNA replication forks via replication fork reversal (RFR). RuvA specifically binds to HJ cruciform DNA, conferring on it an open structure. The RuvB hexamer acts as an ATP-dependent pump, pulling dsDNA into and through the RuvAB complex. HJ branch migration allows RuvC to scan DNA until it finds its consensus sequence, where it cleaves and resolves the cruciform DNA. The protein is Holliday junction branch migration complex subunit RuvA of Burkholderia ambifaria (strain MC40-6).